The sequence spans 239 residues: NADH-quinone oxidoreductase subunit I 1 (239 aa).

4Fe-4S ferredoxin-type domains are found at residues 81 to 111 and 123 to 152; these read LVPR…IEAA and AKFV…MDSG. [4Fe-4S] cluster contacts are provided by cysteine 91, cysteine 94, cysteine 97, cysteine 101, cysteine 132, cysteine 135, cysteine 138, and cysteine 142.

The protein belongs to the complex I 23 kDa subunit family. In terms of assembly, NDH-1 is composed of 14 different subunits. Subunits NuoA, H, J, K, L, M, N constitute the membrane sector of the complex. It depends on [4Fe-4S] cluster as a cofactor.

Its subcellular location is the cell inner membrane. The enzyme catalyses a quinone + NADH + 5 H(+)(in) = a quinol + NAD(+) + 4 H(+)(out). Functionally, NDH-1 shuttles electrons from NADH, via FMN and iron-sulfur (Fe-S) centers, to quinones in the respiratory chain. The immediate electron acceptor for the enzyme in this species is believed to be ubiquinone. Couples the redox reaction to proton translocation (for every two electrons transferred, four hydrogen ions are translocated across the cytoplasmic membrane), and thus conserves the redox energy in a proton gradient. This Anaeromyxobacter dehalogenans (strain 2CP-C) protein is NADH-quinone oxidoreductase subunit I 1.